Here is a 450-residue protein sequence, read N- to C-terminus: Cytochrome c1 (450 aa).

The N-terminal stretch at 1–21 is a signal peptide; it reads MTLRNASLTAVAALTVALAGG. Positions 24-58 are enriched in low complexity; sequence AQDASTAPGTTAPAGSSYHTNEAAPAAADTAPAAE. The segment at 24–210 is disordered; the sequence is AQDASTAPGT…AAAQEAGDSH (187 aa). Acidic residues-rich tracts occupy residues 59–77, 85–108, and 118–194; these read AADEPAAEEAEAGEAEVTE, PAEEPAADEPAATEEPDAEAEPAA, and APAE…EDEA. Residues Cys-245, Cys-248, and His-249 each coordinate heme c. A disordered region spans residues 284–305; sequence PETEEDRPRVPTDHFPTVSGEG. Met-373 lines the heme c pocket. Residues 421-435 form a helical membrane-spanning segment; it reads SVIFLIVLAALLYLT.

The main subunits of complex b-c1 are: cytochrome b, cytochrome c1 and the Rieske protein. In terms of processing, binds 1 heme c group covalently per subunit.

The protein resides in the cell membrane. In terms of biological role, component of the ubiquinol-cytochrome c reductase complex (complex III or cytochrome b-c1 complex), which is a respiratory chain that generates an electrochemical potential coupled to ATP synthesis. c1 functions as an electron donor to cytochrome c. This Paracoccus denitrificans protein is Cytochrome c1 (petC).